Consider the following 392-residue polypeptide: Lipase (392 aa).

A signal peptide spans 1-26 (MVSFISISQGVSLCLLVSSMMLGSSA). Residues 27–95 (VPVSGKSGSS…GGNLTSIGKR (69 aa)) constitute a propeptide that is removed on maturation. Residues 50-69 (PLISSRCAPPSNKGSKSDLQ) are disordered. Disulfide bonds link Cys152–Cys391, Cys163–Cys166, and Cys358–Cys367. Ser268 (nucleophile) is an active-site residue. Asp327 serves as the catalytic Charge relay system. Asp379 contacts Ca(2+). The active-site Charge relay system is the His380.

Belongs to the AB hydrolase superfamily. Lipase family.

The protein localises to the secreted. It localises to the extracellular space. It catalyses the reaction a triacylglycerol + H2O = a diacylglycerol + a fatty acid + H(+). With respect to regulation, lipase activity is maximal at a lipid-water interface (interfacial activation), probably by an induced conformational change that results in an increased accessibility of the active site to the substrate. Hydrolyzes ester bonds of triglycerides as well as of their derived partial glycerides with a strong 1,3-positional specificity. The sequence is that of Lipase from Rhizopus niveus.